Here is a 111-residue protein sequence, read N- to C-terminus: Elevenin (111 aa).

Residues 1 to 24 form the signal peptide; that stretch reads MAPSQKALLVLVLSMLLTASDSRA. The cysteines at positions 29 and 38 are disulfide-linked. A propeptide spanning residues 44–111 is cleaved from the precursor; sequence KRGGDSLSVG…TEQLDRLLTL (68 aa).

Belongs to the elevenin family. In terms of assembly, monomer. As to expression, expressed by the venom duct.

It is found in the secreted. May mimic the function of prey elevenin neuropeptide. In vivo, intracranial injection in mice induces hyperactivity. The chain is Elevenin from Conus ebraeus (Hebrew cone).